The sequence spans 212 residues: Fe/S biogenesis protein NfuA (212 aa).

Cysteine 169 and cysteine 172 together coordinate [4Fe-4S] cluster.

This sequence belongs to the NfuA family. Homodimer. [4Fe-4S] cluster serves as cofactor.

Its function is as follows. Involved in iron-sulfur cluster biogenesis. Binds a 4Fe-4S cluster, can transfer this cluster to apoproteins, and thereby intervenes in the maturation of Fe/S proteins. Could also act as a scaffold/chaperone for damaged Fe/S proteins. In Acinetobacter baylyi (strain ATCC 33305 / BD413 / ADP1), this protein is Fe/S biogenesis protein NfuA.